Here is a 548-residue protein sequence, read N- to C-terminus: ATP synthase subunit alpha (548 aa).

172 to 179 (GDRKTGKT) serves as a coordination point for ATP. The interval 526 to 548 (AEAMDEADVEKESVKVRKPAPKK) is disordered.

It belongs to the ATPase alpha/beta chains family. F-type ATPases have 2 components, CF(1) - the catalytic core - and CF(0) - the membrane proton channel. CF(1) has five subunits: alpha(3), beta(3), gamma(1), delta(1), epsilon(1). CF(0) has three main subunits: a(1), b(2) and c(9-12). The alpha and beta chains form an alternating ring which encloses part of the gamma chain. CF(1) is attached to CF(0) by a central stalk formed by the gamma and epsilon chains, while a peripheral stalk is formed by the delta and b chains.

It is found in the cell membrane. The catalysed reaction is ATP + H2O + 4 H(+)(in) = ADP + phosphate + 5 H(+)(out). Produces ATP from ADP in the presence of a proton gradient across the membrane. The alpha chain is a regulatory subunit. The sequence is that of ATP synthase subunit alpha from Mycolicibacterium vanbaalenii (strain DSM 7251 / JCM 13017 / BCRC 16820 / KCTC 9966 / NRRL B-24157 / PYR-1) (Mycobacterium vanbaalenii).